The primary structure comprises 147 residues: UPF0306 protein YhbP (147 aa).

It belongs to the UPF0306 family.

This is UPF0306 protein YhbP from Shigella dysenteriae serotype 1 (strain Sd197).